The chain runs to 212 residues: Cyclin-dependent kinase 2-interacting protein (212 aa).

Methionine 1 is modified (N-acetylmethionine). Residues serine 69 and serine 73 each carry the phosphoserine modification. Residues 73–107 (SKENEEKVCLEYNEELEKLCEELQATLDGLTKIQV) are a coiled coil. A Na(+)-binding site is contributed by serine 202.

Belongs to the CINP family. Homodimer. Part of the 55LCC heterohexameric ATPase complex composed at least of AIRIM, AFG2A, AFG2B and CINP. Interacts with AIRIM. Interacts with CDK2 and CDC7. Interacts with the components of the replication complex, MCM2, MCM3, MCM4, MCM5, MCM6, MCM7 and with ORC2-containing complexes. Interacts with ATRIP. Interacts with CEP152. Associates with pre-60S ribosomal particles. Phosphorylated by CDC7 but not by CDK2.

Its subcellular location is the nucleus. In terms of biological role, component of the DNA replication complex, which interacts with two kinases, CDK2 and CDC7, thereby providing a functional and physical link between CDK2 and CDC7 during firing of the origins of replication. Regulates ATR-mediated checkpoint signaling in response to DNA damage. Part of the 55LCC heterohexameric ATPase complex which is chromatin-associated and promotes replisome proteostasis to maintain replication fork progression and genome stability. Required for replication fork progression, sister chromatid cohesion, and chromosome stability. The ATPase activity is specifically enhanced by replication fork DNA and is coupled to cysteine protease-dependent cleavage of replisome substrates in response to replication fork damage. Uses ATPase activity to process replisome substrates in S-phase, facilitating their proteolytic turnover from chromatin to ensure DNA replication and mitotic fidelity. As part of 55LCC complex, also involved in the cytoplasmic maturation steps of pre-60S ribosomal particles by promoting the release of shuttling protein RSL24D1/RLP24 from the pre-ribosomal particles. In Homo sapiens (Human), this protein is Cyclin-dependent kinase 2-interacting protein.